The following is a 396-amino-acid chain: Probable sugar efflux transporter (396 aa).

Residues methionine 1 to arginine 14 are Cytoplasmic-facing. The helical transmembrane segment at valine 15–leucine 35 threads the bilayer. The Periplasmic segment spans residues leucine 36 to glutamine 49. The chain crosses the membrane as a helical span at residues valine 50 to leucine 70. Over methionine 71–leucine 80 the chain is Cytoplasmic. Residues leucine 81 to phenylalanine 101 form a helical membrane-spanning segment. A topological domain (periplasmic) is located at residue threonine 102. The chain crosses the membrane as a helical span at residues valine 103–alanine 123. At serine 124–arginine 135 the chain is on the cytoplasmic side. The helical transmembrane segment at alanine 136 to leucine 156 threads the bilayer. Over glycine 157–threonine 169 the chain is Periplasmic. A helical transmembrane segment spans residues phenylalanine 170–leucine 190. Over leucine 191 to arginine 208 the chain is Cytoplasmic. Residues proline 209–tyrosine 229 form a helical membrane-spanning segment. At serine 230–asparagine 245 the chain is on the periplasmic side. The chain crosses the membrane as a helical span at residues phenylalanine 246–glycine 266. At lysine 267–serine 274 the chain is on the cytoplasmic side. The chain crosses the membrane as a helical span at residues alanine 275–alanine 295. The Periplasmic segment spans residues asparagine 296–glutamate 298. The helical transmembrane segment at isoleucine 299 to methionine 319 threads the bilayer. At glutamine 320 to aspartate 332 the chain is on the cytoplasmic side. Residues valine 333 to glycine 353 form a helical membrane-spanning segment. Residues asparagine 354–serine 363 are Periplasmic-facing. A helical membrane pass occupies residues methionine 364–phenylalanine 384. The Cytoplasmic segment spans residues arginine 385–glutamine 396.

The protein belongs to the major facilitator superfamily. SotB (TC 2.A.1.2) family.

The protein localises to the cell inner membrane. In terms of biological role, involved in the efflux of sugars. The physiological role may be the reduction of the intracellular concentration of toxic sugars or sugar metabolites. This Escherichia coli O157:H7 protein is Probable sugar efflux transporter.